The sequence spans 62 residues: Alpha-elapitoxin-Pc1 (62 aa).

Disulfide bonds link C3/C24, C17/C41, C43/C54, and C55/C60.

The protein belongs to the three-finger toxin family. Short-chain subfamily. Type I alpha-neurotoxin sub-subfamily. Expressed by the venom gland.

The protein resides in the secreted. Bird-specific neurotoxin (tested on chicken) that acts as pseudo-irreversible antagonists at the nicotinic acetylcholine receptor (nAChR) of the skeletal neuromuscular junction. Has no significant effect on the electrically-induced twitches of the rat isolated phrenic nerve-diaphragm preparation. This is Alpha-elapitoxin-Pc1 from Pseudechis colletti (Collett's snake).